We begin with the raw amino-acid sequence, 422 residues long: Histidine--tRNA ligase (422 aa).

The protein belongs to the class-II aminoacyl-tRNA synthetase family. Homodimer.

The protein localises to the cytoplasm. The enzyme catalyses tRNA(His) + L-histidine + ATP = L-histidyl-tRNA(His) + AMP + diphosphate + H(+). The protein is Histidine--tRNA ligase of Onion yellows phytoplasma (strain OY-M).